We begin with the raw amino-acid sequence, 314 residues long: Glycerate dehydrogenase (314 aa).

NAD(+)-binding positions include T74, 157–158, 228–230, and D254; these read AL and TAR. R230 is an active-site residue. E259 is an active-site residue. H280 acts as the Proton donor in catalysis. Residue 280 to 283 participates in NAD(+) binding; it reads HVAW.

The protein belongs to the D-isomer specific 2-hydroxyacid dehydrogenase family. In terms of assembly, homodimer.

The protein resides in the cytoplasm. It catalyses the reaction (R)-glycerate + NAD(+) = 3-hydroxypyruvate + NADH + H(+). It participates in one-carbon metabolism; formaldehyde assimilation via serine pathway. Its function is as follows. Plays a central role in assimilation of carbon. It converts hydroxypyruvate to glycerate as a key step in the serine cycle, and may also play an important role in C2 reactions, by interconverting glyoxylate and glycolate. The polypeptide is Glycerate dehydrogenase (hprA) (Methylorubrum extorquens (strain ATCC 14718 / DSM 1338 / JCM 2805 / NCIMB 9133 / AM1) (Methylobacterium extorquens)).